We begin with the raw amino-acid sequence, 388 residues long: Transcription factor TB1 (388 aa).

The TCP domain occupies 115–173 (RKDRHSKISTAGGMRDRRMRLSLDVARKFFALQDMLGFDKASKTVQWLLNMSKAAIREI). 2 disordered regions span residues 180-269 (SVCE…EKNR) and 289-331 (AAGE…VGVS). The segment covering 187-201 (SSSLSVDGKQQQHSN) has biased composition (polar residues). 2 stretches are compositionally biased toward basic and acidic residues: residues 210-224 (GDHKGAAHGHSDGKK) and 247-269 (VPDKESRAKARERARERTKEKNR). The R domain maps to 250 to 267 (KESRAKARERARERTKEK). Low complexity predominate over residues 289–314 (AAGEDKSPTSPSNNLNHSSSTNLVST).

In terms of assembly, interacts with MADS57. As to expression, expressed in the axillary bud of the first formed leaf node. Expressed in axillary buds, shoot apical meristem, young leaves, vascular tissues and the tips of crown roots.

It localises to the nucleus. In terms of biological role, probable transcription factor that functions as a negative regulator of lateral branching, presumably through its expression in axillary buds. Involved in the fine tuning of shoot branching. May function as an integrator of multiple signaling pathways to regulate the development of axillary buds. Works partially downstream of strigolactones to inhibit bud outgrowth. Binds to MADS57 to suppress the negative regulation of D14 by MADS57 and balance the expression of D14 for tillering. The polypeptide is Transcription factor TB1 (Oryza sativa subsp. japonica (Rice)).